The chain runs to 179 residues: Large ribosomal subunit protein uL6 (179 aa).

It belongs to the universal ribosomal protein uL6 family. As to quaternary structure, part of the 50S ribosomal subunit.

This protein binds to the 23S rRNA, and is important in its secondary structure. It is located near the subunit interface in the base of the L7/L12 stalk, and near the tRNA binding site of the peptidyltransferase center. In Halothermothrix orenii (strain H 168 / OCM 544 / DSM 9562), this protein is Large ribosomal subunit protein uL6.